Consider the following 98-residue polypeptide: Cystatin-A (98 aa).

Met-1 carries the N-acetylmethionine modification. A Secondary area of contact motif is present at residues 46–50; sequence QVVAG.

Belongs to the cystatin family.

It localises to the cytoplasm. Functionally, this is an intracellular thiol proteinase inhibitor. The chain is Cystatin-A (CSTA) from Felis catus (Cat).